Consider the following 470-residue polypeptide: tRNA modification GTPase MnmE (470 aa).

Arg-24, Glu-81, and Lys-122 together coordinate (6S)-5-formyl-5,6,7,8-tetrahydrofolate. The region spanning 218-383 is the TrmE-type G domain; it reads GIKIVIAGKP…LQEYLSNNIK (166 aa). Asn-228 contacts K(+). GTP-binding positions include 228 to 233, 247 to 253, and 272 to 275; these read NAGKSS, STISGTT, and DTAG. Residue Ser-232 coordinates Mg(2+). Ser-247, Ile-249, and Thr-252 together coordinate K(+). Thr-253 is a Mg(2+) binding site. Residue Lys-470 participates in (6S)-5-formyl-5,6,7,8-tetrahydrofolate binding.

It belongs to the TRAFAC class TrmE-Era-EngA-EngB-Septin-like GTPase superfamily. TrmE GTPase family. Homodimer. Heterotetramer of two MnmE and two MnmG subunits. K(+) is required as a cofactor.

It is found in the cytoplasm. Exhibits a very high intrinsic GTPase hydrolysis rate. Involved in the addition of a carboxymethylaminomethyl (cmnm) group at the wobble position (U34) of certain tRNAs, forming tRNA-cmnm(5)s(2)U34. This chain is tRNA modification GTPase MnmE, found in Blochmanniella pennsylvanica (strain BPEN).